The sequence spans 200 residues: 3-isopropylmalate dehydratase small subunit 2 (200 aa).

This sequence belongs to the LeuD family. LeuD type 1 subfamily. As to quaternary structure, heterodimer of LeuC and LeuD.

It carries out the reaction (2R,3S)-3-isopropylmalate = (2S)-2-isopropylmalate. The protein operates within amino-acid biosynthesis; L-leucine biosynthesis; L-leucine from 3-methyl-2-oxobutanoate: step 2/4. Its function is as follows. Catalyzes the isomerization between 2-isopropylmalate and 3-isopropylmalate, via the formation of 2-isopropylmaleate. This Mannheimia succiniciproducens (strain KCTC 0769BP / MBEL55E) protein is 3-isopropylmalate dehydratase small subunit 2.